The following is a 787-amino-acid chain: Protein translocase subunit SecA 2 (787 aa).

ATP contacts are provided by residues Q86, 104-108 (GEGKT), and D493.

It belongs to the SecA family. As to quaternary structure, monomer and homodimer. Part of the essential Sec protein translocation apparatus which comprises SecA, SecYEG and auxiliary proteins SecDF. Other proteins may also be involved.

The protein resides in the cell membrane. The protein localises to the cytoplasm. The catalysed reaction is ATP + H2O + cellular proteinSide 1 = ADP + phosphate + cellular proteinSide 2.. Its function is as follows. Part of the Sec protein translocase complex. Interacts with the SecYEG preprotein conducting channel. Has a central role in coupling the hydrolysis of ATP to the transfer of proteins into and across the cell membrane, serving as an ATP-driven molecular motor driving the stepwise translocation of polypeptide chains across the membrane. The polypeptide is Protein translocase subunit SecA 2 (Bacillus thuringiensis subsp. konkukian (strain 97-27)).